A 415-amino-acid polypeptide reads, in one-letter code: uncharacterized protein (415 aa).

[4Fe-4S] cluster contacts are provided by Cys-66, Cys-72, Cys-75, and Cys-149. Positions 249, 276, 296, and 344 each coordinate S-adenosyl-L-methionine. The active-site Nucleophile is Cys-370.

The protein belongs to the class I-like SAM-binding methyltransferase superfamily. RNA M5U methyltransferase family.

This is an uncharacterized protein from Brucella suis biovar 1 (strain 1330).